Reading from the N-terminus, the 972-residue chain is C-1-tetrahydrofolate synthase, mitochondrial (972 aa).

The N-terminal 55 residues, 1–55 (MNVMVSFNQLRNYFLESNSLRPSKWLFQSYGTSSSANILNGKLLARKLQRSVAEE), are a transit peptide targeting the mitochondrion. The segment at 56 to 340 (VQALKAKDRN…DLNPLELKKP (285 aa)) is methylenetetrahydrofolate dehydrogenase and cyclohydrolase. Substrate contacts are provided by residues 84 to 88 (YVRMK) and 131 to 133 (VQL). Residues 202–204 (GRS) and Ser227 each bind NADP(+). 299–303 (PGGVG) contributes to the substrate binding site. Positions 341-972 (VPSDIEIANS…CENGEIVGLS (632 aa)) are formyltetrahydrofolate synthetase. 405–412 (TPFGEGKS) provides a ligand contact to ATP.

It in the N-terminal section; belongs to the tetrahydrofolate dehydrogenase/cyclohydrolase family. This sequence in the C-terminal section; belongs to the formate--tetrahydrofolate ligase family. In terms of assembly, homodimer.

It localises to the mitochondrion. It carries out the reaction (6R)-5,10-methylene-5,6,7,8-tetrahydrofolate + NADP(+) = (6R)-5,10-methenyltetrahydrofolate + NADPH. The catalysed reaction is (6R)-5,10-methenyltetrahydrofolate + H2O = (6R)-10-formyltetrahydrofolate + H(+). It catalyses the reaction (6S)-5,6,7,8-tetrahydrofolate + formate + ATP = (6R)-10-formyltetrahydrofolate + ADP + phosphate. It functions in the pathway one-carbon metabolism; tetrahydrofolate interconversion. Its function is as follows. Mitochondrial isozyme of C-1-tetrahydrofolate synthase. The trifunctional enzyme catalyzes the interconversion of the one-carbon derivatives of tetrahydrofolate (THF) between different oxidation states by the enzymatic activities 10-formyltetrahydrofolate synthetase, 5,lO-methenyltetrahydrofolate cyclohydrolase, and 5,lO-methylenetetrahydrofolate dehydrogenase. The chain is C-1-tetrahydrofolate synthase, mitochondrial (ade9) from Schizosaccharomyces pombe (strain 972 / ATCC 24843) (Fission yeast).